A 33-amino-acid polypeptide reads, in one-letter code: ADCLAHLKLCKKNNDCCSKKCSRRGTNPEQRCR.

Disulfide bonds link Cys3–Cys17, Cys10–Cys21, and Cys16–Cys32. Positions 23–24 are essential for stimulation of [3H]ryanodine binding to RYR1; it reads RR.

Expressed by the venom gland.

It localises to the secreted. Its function is as follows. This toxin stabilizes ryanodine receptor 1 (RyR1) opening in a long-lasting subconductance state (60% of the full conductance state). Furthermore, it triggers calcium release from sarcoplasmic vesicles (31 nM are enough to induce a sharp release, and 65% of the total calcium is released after toxin (100 nM) addition) probably by acting as a cell-penetrating peptide (CPP). In addition, it has been shown to dose-dependently stimulate ryanodine binding to RyR1 (EC(50)=3.7 nM). It also augments the bell-shaped calcium-[3H]ryanodine binding curve that is maximal at about 10 uM calcium concentration. It binds a different site as ryanodine. It acts synergistically with caffeine. In vivo, intracerebroventricular injection into mice induces neurotoxic symptoms, followed by death. In Vaejovis mexicanus (Mexican scorpion), this protein is Vejocalcin.